Here is a 489-residue protein sequence, read N- to C-terminus: Homoserine O-acetyltransferase (489 aa).

An AB hydrolase-1 domain is found at 69-438 (LLLCHALSGS…AEGHDGFLLE (370 aa)). Ser163 serves as the catalytic Nucleophile. Positions 255–329 (ASRHPYPDRL…QTTDSSSLNQ (75 aa)) are disordered. The segment covering 280–290 (EGNRNRRERPC) has biased composition (basic and acidic residues). Low complexity predominate over residues 299–329 (SESALNSPASSVSSLPSLGASQTTDSSSLNQ). Catalysis depends on residues Asp403 and His432.

The protein belongs to the AB hydrolase superfamily. MetX family.

The protein localises to the cytoplasm. The enzyme catalyses L-homoserine + acetyl-CoA = O-acetyl-L-homoserine + CoA. The protein operates within amino-acid biosynthesis; L-methionine biosynthesis via de novo pathway; O-acetyl-L-homoserine from L-homoserine: step 1/1. Its function is as follows. Commits homoserine to the methionine biosynthesis pathway by catalyzing its O-acetylation. The protein is Homoserine O-acetyltransferase (met6) of Schizosaccharomyces pombe (strain 972 / ATCC 24843) (Fission yeast).